Reading from the N-terminus, the 160-residue chain is SsrA-binding protein (160 aa).

It belongs to the SmpB family.

The protein localises to the cytoplasm. In terms of biological role, required for rescue of stalled ribosomes mediated by trans-translation. Binds to transfer-messenger RNA (tmRNA), required for stable association of tmRNA with ribosomes. tmRNA and SmpB together mimic tRNA shape, replacing the anticodon stem-loop with SmpB. tmRNA is encoded by the ssrA gene; the 2 termini fold to resemble tRNA(Ala) and it encodes a 'tag peptide', a short internal open reading frame. During trans-translation Ala-aminoacylated tmRNA acts like a tRNA, entering the A-site of stalled ribosomes, displacing the stalled mRNA. The ribosome then switches to translate the ORF on the tmRNA; the nascent peptide is terminated with the 'tag peptide' encoded by the tmRNA and targeted for degradation. The ribosome is freed to recommence translation, which seems to be the essential function of trans-translation. This Yersinia pseudotuberculosis serotype O:1b (strain IP 31758) protein is SsrA-binding protein.